A 144-amino-acid polypeptide reads, in one-letter code: Endoribonuclease YbeY (144 aa).

3 residues coordinate Zn(2+): His104, His108, and His114.

It belongs to the endoribonuclease YbeY family. It depends on Zn(2+) as a cofactor.

The protein resides in the cytoplasm. Single strand-specific metallo-endoribonuclease involved in late-stage 70S ribosome quality control and in maturation of the 3' terminus of the 16S rRNA. The polypeptide is Endoribonuclease YbeY (Nitratiruptor sp. (strain SB155-2)).